Consider the following 486-residue polypeptide: Cysteine--tRNA ligase (486 aa).

C30 contacts Zn(2+). Residues 32–42 (PTVYDRAHLGN) carry the 'HIGH' region motif. Zn(2+) contacts are provided by C221, H246, and E250. A 'KMSKS' region motif is present at residues 279–283 (KMSKS). Position 282 (K282) interacts with ATP.

This sequence belongs to the class-I aminoacyl-tRNA synthetase family. In terms of assembly, monomer. The cofactor is Zn(2+).

It is found in the cytoplasm. It catalyses the reaction tRNA(Cys) + L-cysteine + ATP = L-cysteinyl-tRNA(Cys) + AMP + diphosphate. This is Cysteine--tRNA ligase from Cereibacter sphaeroides (strain ATCC 17029 / ATH 2.4.9) (Rhodobacter sphaeroides).